A 477-amino-acid chain; its full sequence is MTDTKQLFIEAGQSQLFHNWESLSRKDQEELLSNLEQISSKRSPAKLLEDCQNAIKFSLANSSKDTGVEISPLPPTSYESLIGNSKKENEYWRLGLEAIGKGEVAVILMAGGQGTRLGSSQPKGCYDIGLPSKKSLFQIQAEKLIRLQDMVKDKKVEIPWYIMTSGPTRAATEAYFQEHNYFGLNKEQITFFNQGTLPAFDLTGKHFLMKDPVNLSQSPDGNGGLYRAIKENKLNEDFDRRGIKHVYMYCVDNVLSKIADPVFIGFAIKHGFELATKAVRKRDAHESVGLIATKNEKPCVIEYSEISNELAEAKDKDGLLKLRAGNIVNHYYLVDLLKRDLDQWCENMPYHIAKKKIPAYDSVTGKYTKPTEPNGIKLEQFIFDVFDTVPLNKFGCLEVDRCKEFSPLKNGPGSKNDNPETSRLAYLKLGTSWLEDAGAIVKDGVLVEVSSKLSYAGENLSQFKGKVFDRSGIVLEK.

Residues 109–112 carry the Substrate binding motif; that stretch reads MAGG. Residues 109 to 112, lysine 123, and glutamine 194 each bind UTP; that span reads MAGG. Position 218 is a phosphoserine (serine 218). Residue glycine 221 coordinates UTP. Asparagine 222 is a substrate binding site. Aspartate 252 is a binding site for UTP. Residues 302–303 carry the Substrate binding motif; it reads EY. Position 377 (lysine 377) interacts with UTP. Position 409 (lysine 409) interacts with substrate. A Phosphoserine modification is found at serine 461.

The protein belongs to the UDPGP type 1 family.

The protein resides in the cytoplasm. It carries out the reaction N-acetyl-alpha-D-glucosamine 1-phosphate + UTP + H(+) = UDP-N-acetyl-alpha-D-glucosamine + diphosphate. The protein operates within nucleotide-sugar biosynthesis; UDP-N-acetyl-alpha-D-glucosamine biosynthesis; UDP-N-acetyl-alpha-D-glucosamine from N-acetyl-alpha-D-glucosamine 1-phosphate: step 1/1. UDP-N-acetylglucosamine pyrophosphorylase that utilizes N-acetylglucosamine-1-phosphate as substrate. Together with AGM1, is involved in the production of UDP-N-acetylglucosamine from N-acetylglucosamine-6-phosphate. The sequence is that of UDP-N-acetylglucosamine pyrophosphorylase (QRI1) from Saccharomyces cerevisiae (strain ATCC 204508 / S288c) (Baker's yeast).